The primary structure comprises 330 residues: Ketol-acid reductoisomerase (NADP(+)) (330 aa).

Residues 3-184 form the KARI N-terminal Rossmann domain; that stretch reads LSVYYDKDID…GGGRMGVLET (182 aa). Residues 26-29, Ser52, and Ser54 each bind NADP(+); that span reads YGTQ. His109 is an active-site residue. Gly135 contacts NADP(+). The KARI C-terminal knotted domain maps to 185–329; it reads SFKEECESDL…EILRTPFNHE (145 aa). Mg(2+) contacts are provided by Asp193, Glu197, Glu229, and Glu233. Residue Ser254 coordinates substrate.

The protein belongs to the ketol-acid reductoisomerase family. Mg(2+) serves as cofactor.

It carries out the reaction (2R)-2,3-dihydroxy-3-methylbutanoate + NADP(+) = (2S)-2-acetolactate + NADPH + H(+). It catalyses the reaction (2R,3R)-2,3-dihydroxy-3-methylpentanoate + NADP(+) = (S)-2-ethyl-2-hydroxy-3-oxobutanoate + NADPH + H(+). It participates in amino-acid biosynthesis; L-isoleucine biosynthesis; L-isoleucine from 2-oxobutanoate: step 2/4. The protein operates within amino-acid biosynthesis; L-valine biosynthesis; L-valine from pyruvate: step 2/4. Its function is as follows. Involved in the biosynthesis of branched-chain amino acids (BCAA). Catalyzes an alkyl-migration followed by a ketol-acid reduction of (S)-2-acetolactate (S2AL) to yield (R)-2,3-dihydroxy-isovalerate. In the isomerase reaction, S2AL is rearranged via a Mg-dependent methyl migration to produce 3-hydroxy-3-methyl-2-ketobutyrate (HMKB). In the reductase reaction, this 2-ketoacid undergoes a metal-dependent reduction by NADPH to yield (R)-2,3-dihydroxy-isovalerate. This Helicobacter acinonychis (strain Sheeba) protein is Ketol-acid reductoisomerase (NADP(+)).